The sequence spans 193 residues: Xanthine phosphoribosyltransferase (193 aa).

The xanthine site is built by leucine 20 and asparagine 27. Position 129–133 (129–133) interacts with 5-phospho-alpha-D-ribose 1-diphosphate; sequence ANGKA. A xanthine-binding site is contributed by lysine 157.

It belongs to the purine/pyrimidine phosphoribosyltransferase family. Xpt subfamily. Homodimer.

Its subcellular location is the cytoplasm. It carries out the reaction XMP + diphosphate = xanthine + 5-phospho-alpha-D-ribose 1-diphosphate. It participates in purine metabolism; XMP biosynthesis via salvage pathway; XMP from xanthine: step 1/1. In terms of biological role, converts the preformed base xanthine, a product of nucleic acid breakdown, to xanthosine 5'-monophosphate (XMP), so it can be reused for RNA or DNA synthesis. The sequence is that of Xanthine phosphoribosyltransferase from Bifidobacterium adolescentis (strain ATCC 15703 / DSM 20083 / NCTC 11814 / E194a).